The following is a 188-amino-acid chain: MAVGLFGGSFNPPHDGHALVAETALRRLGLDQLWWMVTPGNPLKDRNHLAPLGERIAMSEKIARNPRIKVTAFEQALGQSYTARTLEVIRARNRDVRFVWVMGADNLKNFHRWQDWRKIVATFPIAVVDRPGSTLAYLSSPMARAFSSARVDEDDAGTLAFRRAPAWTFIHGPRSGLSSTALRSAKSG.

The protein belongs to the NadD family.

The enzyme catalyses nicotinate beta-D-ribonucleotide + ATP + H(+) = deamido-NAD(+) + diphosphate. The protein operates within cofactor biosynthesis; NAD(+) biosynthesis; deamido-NAD(+) from nicotinate D-ribonucleotide: step 1/1. Catalyzes the reversible adenylation of nicotinate mononucleotide (NaMN) to nicotinic acid adenine dinucleotide (NaAD). This is Probable nicotinate-nucleotide adenylyltransferase from Rhizobium meliloti (strain 1021) (Ensifer meliloti).